The sequence spans 360 residues: UDP-N-acetylglucosamine--N-acetylmuramyl-(pentapeptide) pyrophosphoryl-undecaprenol N-acetylglucosamine transferase (360 aa).

Residues 11 to 13 (TGG), Asn117, Arg160, Ser192, and Gln294 each bind UDP-N-acetyl-alpha-D-glucosamine.

Belongs to the glycosyltransferase 28 family. MurG subfamily.

The protein resides in the cell inner membrane. The catalysed reaction is di-trans,octa-cis-undecaprenyl diphospho-N-acetyl-alpha-D-muramoyl-L-alanyl-D-glutamyl-meso-2,6-diaminopimeloyl-D-alanyl-D-alanine + UDP-N-acetyl-alpha-D-glucosamine = di-trans,octa-cis-undecaprenyl diphospho-[N-acetyl-alpha-D-glucosaminyl-(1-&gt;4)]-N-acetyl-alpha-D-muramoyl-L-alanyl-D-glutamyl-meso-2,6-diaminopimeloyl-D-alanyl-D-alanine + UDP + H(+). Its pathway is cell wall biogenesis; peptidoglycan biosynthesis. In terms of biological role, cell wall formation. Catalyzes the transfer of a GlcNAc subunit on undecaprenyl-pyrophosphoryl-MurNAc-pentapeptide (lipid intermediate I) to form undecaprenyl-pyrophosphoryl-MurNAc-(pentapeptide)GlcNAc (lipid intermediate II). This Rickettsia felis (strain ATCC VR-1525 / URRWXCal2) (Rickettsia azadi) protein is UDP-N-acetylglucosamine--N-acetylmuramyl-(pentapeptide) pyrophosphoryl-undecaprenol N-acetylglucosamine transferase.